A 235-amino-acid polypeptide reads, in one-letter code: Leucyl/phenylalanyl-tRNA--protein transferase (235 aa).

The protein belongs to the L/F-transferase family.

The protein resides in the cytoplasm. It catalyses the reaction N-terminal L-lysyl-[protein] + L-leucyl-tRNA(Leu) = N-terminal L-leucyl-L-lysyl-[protein] + tRNA(Leu) + H(+). The enzyme catalyses N-terminal L-arginyl-[protein] + L-leucyl-tRNA(Leu) = N-terminal L-leucyl-L-arginyl-[protein] + tRNA(Leu) + H(+). It carries out the reaction L-phenylalanyl-tRNA(Phe) + an N-terminal L-alpha-aminoacyl-[protein] = an N-terminal L-phenylalanyl-L-alpha-aminoacyl-[protein] + tRNA(Phe). Functions in the N-end rule pathway of protein degradation where it conjugates Leu, Phe and, less efficiently, Met from aminoacyl-tRNAs to the N-termini of proteins containing an N-terminal arginine or lysine. This Azoarcus sp. (strain BH72) protein is Leucyl/phenylalanyl-tRNA--protein transferase.